The following is a 100-amino-acid chain: Large ribosomal subunit protein bL27 (100 aa).

Positions 1–9 are excised as a propeptide; sequence MIIMNLQIF. Positions 13–32 are disordered; sequence KGMGSSKNGRDSESKRLGTK.

It belongs to the bacterial ribosomal protein bL27 family. The N-terminus is cleaved by ribosomal processing cysteine protease Prp.

This chain is Large ribosomal subunit protein bL27, found in Clostridium kluyveri (strain ATCC 8527 / DSM 555 / NBRC 12016 / NCIMB 10680 / K1).